The primary structure comprises 453 residues: Glutamyl-tRNA reductase (453 aa).

Substrate-binding positions include 49-52 (TCNR), Ser109, 114-116 (EQQ), and Gln120. Cys50 acts as the Nucleophile in catalysis. Residue 191–196 (GAGSMG) participates in NADP(+) binding. The interval 432–453 (PAAVATPTDLVDGDRTGRDLQA) is disordered. Over residues 443 to 453 (DGDRTGRDLQA) the composition is skewed to basic and acidic residues.

The protein belongs to the glutamyl-tRNA reductase family. As to quaternary structure, homodimer.

It catalyses the reaction (S)-4-amino-5-oxopentanoate + tRNA(Glu) + NADP(+) = L-glutamyl-tRNA(Glu) + NADPH + H(+). It participates in porphyrin-containing compound metabolism; protoporphyrin-IX biosynthesis; 5-aminolevulinate from L-glutamyl-tRNA(Glu): step 1/2. Functionally, catalyzes the NADPH-dependent reduction of glutamyl-tRNA(Glu) to glutamate 1-semialdehyde (GSA). The sequence is that of Glutamyl-tRNA reductase from Rhodococcus erythropolis (strain PR4 / NBRC 100887).